The chain runs to 454 residues: Bifunctional protein GlmU (454 aa).

The pyrophosphorylase stretch occupies residues 1-226 (MSLDIVILAA…AMEVQGANDR (226 aa)). Residues 8 to 11 (LAAG), Lys22, Gln73, 78 to 79 (GT), 99 to 101 (YGD), Gly136, Glu151, Asn166, and Asn224 contribute to the UDP-N-acetyl-alpha-D-glucosamine site. Residue Asp101 coordinates Mg(2+). Mg(2+) is bound at residue Asn224. The segment at 227 to 247 (LQLAQLERHYQSRVARRLMAQ) is linker. The interval 248–454 (GVTLRDPARF…GWQRPTKQKK (207 aa)) is N-acetyltransferase. 2 residues coordinate UDP-N-acetyl-alpha-D-glucosamine: Arg330 and Lys348. His360 functions as the Proton acceptor in the catalytic mechanism. Tyr363 and Asn374 together coordinate UDP-N-acetyl-alpha-D-glucosamine. Acetyl-CoA-binding positions include Ala377, 383–384 (NY), Ser402, Ala420, and Arg437.

In the N-terminal section; belongs to the N-acetylglucosamine-1-phosphate uridyltransferase family. This sequence in the C-terminal section; belongs to the transferase hexapeptide repeat family. In terms of assembly, homotrimer. The cofactor is Mg(2+).

The protein resides in the cytoplasm. The enzyme catalyses alpha-D-glucosamine 1-phosphate + acetyl-CoA = N-acetyl-alpha-D-glucosamine 1-phosphate + CoA + H(+). The catalysed reaction is N-acetyl-alpha-D-glucosamine 1-phosphate + UTP + H(+) = UDP-N-acetyl-alpha-D-glucosamine + diphosphate. It functions in the pathway nucleotide-sugar biosynthesis; UDP-N-acetyl-alpha-D-glucosamine biosynthesis; N-acetyl-alpha-D-glucosamine 1-phosphate from alpha-D-glucosamine 6-phosphate (route II): step 2/2. The protein operates within nucleotide-sugar biosynthesis; UDP-N-acetyl-alpha-D-glucosamine biosynthesis; UDP-N-acetyl-alpha-D-glucosamine from N-acetyl-alpha-D-glucosamine 1-phosphate: step 1/1. It participates in bacterial outer membrane biogenesis; LPS lipid A biosynthesis. Its function is as follows. Catalyzes the last two sequential reactions in the de novo biosynthetic pathway for UDP-N-acetylglucosamine (UDP-GlcNAc). The C-terminal domain catalyzes the transfer of acetyl group from acetyl coenzyme A to glucosamine-1-phosphate (GlcN-1-P) to produce N-acetylglucosamine-1-phosphate (GlcNAc-1-P), which is converted into UDP-GlcNAc by the transfer of uridine 5-monophosphate (from uridine 5-triphosphate), a reaction catalyzed by the N-terminal domain. This is Bifunctional protein GlmU from Azotobacter vinelandii (strain DJ / ATCC BAA-1303).